The following is a 29-amino-acid chain: LKVPDLPLPESYKKALELAKDDLAREIXI.

As to expression, expressed by the venom gland.

The protein resides in the secreted. The chain is Scolopendra 8011.73 Da toxin from Scolopendra viridicornis nigra (Brazilian giant centipede).